A 1117-amino-acid polypeptide reads, in one-letter code: Leucine-rich repeats and immunoglobulin-like domains protein 3 (1117 aa).

A signal peptide spans 1 to 24; that stretch reads MGAPGLRAATAALGLLLCAGLGRA. The region spanning 38-74 is the LRRNT domain; that stretch reads LLDDDAQRPCPAACHCLGDLLDCSRRRLVRLPDPLPA. 15 LRR repeats span residues 75–98, 99–120, 122–143, 146–168, 169–189, 193–214, 216–237, 240–261, 264–285, 288–309, 312–333, 336–357, 360–382, 387–408, and 411–432; these read WVTR…SHLQ, SLQE…GSIS, NIRQ…QLEA, SLET…PPLQ, LKYL…YFDN, TLLV…MFKL, QLQH…TFQG, ALKS…AFWG, NMEV…WLYG, MLRE…AWEF, KLSE…SFLG, LLNA…AFRG, SLKT…SGAF, RLRQ…AFAG, and TLEH…AFSQ. N-linked (GlcNAc...) asparagine glycosylation is present at asparagine 156. Asparagine 274 carries N-linked (GlcNAc...) asparagine glycosylation. Asparagine 442 and asparagine 469 each carry an N-linked (GlcNAc...) asparagine glycan. The 52-residue stretch at 444-495 folds into the LRRCT domain; that stretch reads SSLLCDCQLRWLPQWVAENNFQSFVNASCAHPQLLKGRSIFTVSPDGFVCDD. Ig-like C2-type domains lie at 499–598, 603–692, and 697–783; these read PQIT…AKLT, PSFT…ATLT, and PSFL…VRLS. Cystine bridges form between cysteine 520–cysteine 581 and cysteine 624–cysteine 676. Asparagine 688 and asparagine 729 each carry an N-linked (GlcNAc...) asparagine glycan. The cysteines at positions 718 and 767 are disulfide-linked. The helical transmembrane segment at 810–830 threads the bilayer; sequence VVIIAVVCCVVGTSLVWVVII. The N-linked (GlcNAc...) asparagine glycan is linked to asparagine 1014. Residues 1019-1093 form a disordered region; it reads DFSTGPEPGS…KERTDFREEN (75 aa). Positions 1083-1093 are enriched in basic and acidic residues; sequence DKERTDFREEN.

As to quaternary structure, interacts with EGFR, ERBB2 and ERBB4 (in vitro). As to expression, widely expressed.

Its subcellular location is the cell membrane. It localises to the cytoplasmic vesicle membrane. Its function is as follows. Plays a role in craniofacial and inner ear morphogenesis during embryonic development. Acts within the otic vesicle epithelium to control formation of the lateral semicircular canal in the inner ear, possibly by restricting the expression of NTN1. The protein is Leucine-rich repeats and immunoglobulin-like domains protein 3 (Lrig3) of Mus musculus (Mouse).